A 234-amino-acid polypeptide reads, in one-letter code: Carboxy-S-adenosyl-L-methionine synthase (234 aa).

S-adenosyl-L-methionine contacts are provided by residues tyrosine 35, glycine 60–serine 62, aspartate 83–asparagine 84, aspartate 109–isoleucine 110, asparagine 124, and arginine 191.

Belongs to the class I-like SAM-binding methyltransferase superfamily. Cx-SAM synthase family. In terms of assembly, homodimer.

The catalysed reaction is prephenate + S-adenosyl-L-methionine = carboxy-S-adenosyl-L-methionine + 3-phenylpyruvate + H2O. Functionally, catalyzes the conversion of S-adenosyl-L-methionine (SAM) to carboxy-S-adenosyl-L-methionine (Cx-SAM). In Campylobacter hominis (strain ATCC BAA-381 / DSM 21671 / CCUG 45161 / LMG 19568 / NCTC 13146 / CH001A), this protein is Carboxy-S-adenosyl-L-methionine synthase.